We begin with the raw amino-acid sequence, 360 residues long: Phospho-N-acetylmuramoyl-pentapeptide-transferase (360 aa).

10 consecutive transmembrane segments (helical) span residues 26-46 (AILGVMTALGLSLLLGPWVIN), 70-90 (GTPTMGGTLILFAIVFATLLW), 97-117 (YVLAVLFVTLSFGLVGWVDDY), 134-154 (YFWQSLAGFTVAYGLYVTAQI), 167-187 (GVALELGVFYIILTYFMVVGF), 199-219 (GLAIMPTVMVGSALGIIAYLV), 236-256 (AGELVVYCAALAGAGLGFLWF), 263-283 (VFMGDVGALALGAALGIIAVI), 288-308 (IVFIIMSGIFVMETVSVILQV), and 338-358 (VIVRFWIITVMLVLFGLATLK).

This sequence belongs to the glycosyltransferase 4 family. MraY subfamily. It depends on Mg(2+) as a cofactor.

Its subcellular location is the cell inner membrane. It carries out the reaction UDP-N-acetyl-alpha-D-muramoyl-L-alanyl-gamma-D-glutamyl-meso-2,6-diaminopimeloyl-D-alanyl-D-alanine + di-trans,octa-cis-undecaprenyl phosphate = di-trans,octa-cis-undecaprenyl diphospho-N-acetyl-alpha-D-muramoyl-L-alanyl-D-glutamyl-meso-2,6-diaminopimeloyl-D-alanyl-D-alanine + UMP. The protein operates within cell wall biogenesis; peptidoglycan biosynthesis. In terms of biological role, catalyzes the initial step of the lipid cycle reactions in the biosynthesis of the cell wall peptidoglycan: transfers peptidoglycan precursor phospho-MurNAc-pentapeptide from UDP-MurNAc-pentapeptide onto the lipid carrier undecaprenyl phosphate, yielding undecaprenyl-pyrophosphoryl-MurNAc-pentapeptide, known as lipid I. The chain is Phospho-N-acetylmuramoyl-pentapeptide-transferase from Saccharophagus degradans (strain 2-40 / ATCC 43961 / DSM 17024).